The primary structure comprises 297 residues: MRPSLSDYQHVASGKVRELYRVDDEHLLFVATDRISAFDFVLDTPIPDKGRILTAMSVFFFGLLTVPNHLAGPPDDPRIPEEVLGRALLVRRLDMLPVECVARGYLTGSGLLDYQRTGAVCGHVLPQGLGEASRLDPPLFTPATKADIGEHDMNVDFAAVVGLVGAVRANQLRDETIKIYTRAAAHALHKGIILADTKFEFGVDIEGNLVLADEVFTPDSSRYWDAAHYQPGVVQDSFDKQFVRNWLTGPESGWDRASDTPPPPLPDEVAVATRERYIEAYERISGLSFSDWIGPSA.

The protein belongs to the SAICAR synthetase family.

The catalysed reaction is 5-amino-1-(5-phospho-D-ribosyl)imidazole-4-carboxylate + L-aspartate + ATP = (2S)-2-[5-amino-1-(5-phospho-beta-D-ribosyl)imidazole-4-carboxamido]succinate + ADP + phosphate + 2 H(+). It functions in the pathway purine metabolism; IMP biosynthesis via de novo pathway; 5-amino-1-(5-phospho-D-ribosyl)imidazole-4-carboxamide from 5-amino-1-(5-phospho-D-ribosyl)imidazole-4-carboxylate: step 1/2. The chain is Phosphoribosylaminoimidazole-succinocarboxamide synthase from Mycobacteroides abscessus (strain ATCC 19977 / DSM 44196 / CCUG 20993 / CIP 104536 / JCM 13569 / NCTC 13031 / TMC 1543 / L948) (Mycobacterium abscessus).